The primary structure comprises 252 residues: Orotidine 5'-phosphate decarboxylase (252 aa).

Residues aspartate 26, lysine 48, 75-84 (DLKFHDIPNT), threonine 135, arginine 196, glutamine 205, glycine 225, and arginine 226 contribute to the substrate site. Lysine 77 functions as the Proton donor in the catalytic mechanism.

It belongs to the OMP decarboxylase family. Type 1 subfamily. In terms of assembly, homodimer.

The catalysed reaction is orotidine 5'-phosphate + H(+) = UMP + CO2. It participates in pyrimidine metabolism; UMP biosynthesis via de novo pathway; UMP from orotate: step 2/2. Functionally, catalyzes the decarboxylation of orotidine 5'-monophosphate (OMP) to uridine 5'-monophosphate (UMP). The sequence is that of Orotidine 5'-phosphate decarboxylase from Sodalis glossinidius (strain morsitans).